A 154-amino-acid polypeptide reads, in one-letter code: Bacterial ferritin (154 aa).

The region spanning 1 to 145 is the Ferritin-like diiron domain; it reads MQGNQAVVDY…QQLRLIELIG (145 aa). Glutamate 18, glutamate 51, histidine 54, glutamate 93, glutamate 127, and histidine 130 together coordinate Fe cation.

It belongs to the bacterioferritin family. As to quaternary structure, forms a bacterioferritin (BFR) complex with BfrB. Heterooligomer of 24 subunits, arranged as 12 dimers, that are packed together to form an approximately spherical molecule with a central cavity, in which large amounts of iron can be deposited.

The protein resides in the cytoplasm. It carries out the reaction 4 Fe(2+) + O2 + 4 H(+) = 4 Fe(3+) + 2 H2O. The enzyme catalyses Fe(2+)(in) = Fe(2+)(out). Functionally, iron-storage protein. Its ferroxidase center binds Fe(2+), oxidizes it using dioxygen to Fe(3+), and participates in the subsequent Fe(3+) oxide mineral core formation within the central cavity of the BFR protein shell. Plays a role in protection against iron-mediated oxidative stress. The protein is Bacterial ferritin of Neisseria gonorrhoeae.